Reading from the N-terminus, the 362-residue chain is Dihydroorotate dehydrogenase (quinone) (362 aa).

FMN contacts are provided by residues 62-66 and T86; that span reads AGYDK. K66 is a binding site for substrate. 111-115 contributes to the substrate binding site; sequence NRLGF. N139 and N170 together coordinate FMN. N170 contacts substrate. S173 acts as the Nucleophile in catalysis. Substrate is bound at residue N175. Residues K215 and S243 each contribute to the FMN site. Residue 244–245 participates in substrate binding; the sequence is NT. FMN contacts are provided by residues G266, G295, and 316–317; that span reads YS.

It belongs to the dihydroorotate dehydrogenase family. Type 2 subfamily. In terms of assembly, monomer. The cofactor is FMN.

It is found in the cell membrane. It carries out the reaction (S)-dihydroorotate + a quinone = orotate + a quinol. The protein operates within pyrimidine metabolism; UMP biosynthesis via de novo pathway; orotate from (S)-dihydroorotate (quinone route): step 1/1. Functionally, catalyzes the conversion of dihydroorotate to orotate with quinone as electron acceptor. In Rhizobium johnstonii (strain DSM 114642 / LMG 32736 / 3841) (Rhizobium leguminosarum bv. viciae), this protein is Dihydroorotate dehydrogenase (quinone).